Reading from the N-terminus, the 94-residue chain is Integration host factor subunit beta (94 aa).

This sequence belongs to the bacterial histone-like protein family. As to quaternary structure, heterodimer of an alpha and a beta chain.

This protein is one of the two subunits of integration host factor, a specific DNA-binding protein that functions in genetic recombination as well as in transcriptional and translational control. The sequence is that of Integration host factor subunit beta from Brucella anthropi (strain ATCC 49188 / DSM 6882 / CCUG 24695 / JCM 21032 / LMG 3331 / NBRC 15819 / NCTC 12168 / Alc 37) (Ochrobactrum anthropi).